We begin with the raw amino-acid sequence, 512 residues long: ATP synthase subunit alpha (512 aa).

An ATP-binding site is contributed by 169 to 176 (GDRKTGKT).

The protein belongs to the ATPase alpha/beta chains family. As to quaternary structure, F-type ATPases have 2 components, CF(1) - the catalytic core - and CF(0) - the membrane proton channel. CF(1) has five subunits: alpha(3), beta(3), gamma(1), delta(1), epsilon(1). CF(0) has three main subunits: a(1), b(2) and c(9-12). The alpha and beta chains form an alternating ring which encloses part of the gamma chain. CF(1) is attached to CF(0) by a central stalk formed by the gamma and epsilon chains, while a peripheral stalk is formed by the delta and b chains.

It localises to the cell membrane. It catalyses the reaction ATP + H2O + 4 H(+)(in) = ADP + phosphate + 5 H(+)(out). Functionally, produces ATP from ADP in the presence of a proton gradient across the membrane. The alpha chain is a regulatory subunit. The sequence is that of ATP synthase subunit alpha from Limosilactobacillus fermentum (strain NBRC 3956 / LMG 18251) (Lactobacillus fermentum).